The primary structure comprises 303 residues: Quinolinate synthase (303 aa).

Iminosuccinate contacts are provided by His-25 and Ser-42. Cys-87 is a [4Fe-4S] cluster binding site. Iminosuccinate-binding positions include 113–115 and Ser-130; that span reads YVN. Cys-174 is a [4Fe-4S] cluster binding site. Iminosuccinate contacts are provided by residues 200–202 and Thr-217; that span reads HPE. Cys-260 is a [4Fe-4S] cluster binding site.

This sequence belongs to the quinolinate synthase family. Type 2 subfamily. In terms of assembly, homodimer. The cofactor is [4Fe-4S] cluster.

The protein localises to the cytoplasm. The enzyme catalyses iminosuccinate + dihydroxyacetone phosphate = quinolinate + phosphate + 2 H2O + H(+). It functions in the pathway cofactor biosynthesis; NAD(+) biosynthesis; quinolinate from iminoaspartate: step 1/1. Functionally, catalyzes the condensation of iminoaspartate with dihydroxyacetone phosphate to form quinolinate. The chain is Quinolinate synthase from Pyrococcus furiosus (strain ATCC 43587 / DSM 3638 / JCM 8422 / Vc1).